A 99-amino-acid polypeptide reads, in one-letter code: UPF0235 protein Neut_2146 (99 aa).

The protein belongs to the UPF0235 family.

The polypeptide is UPF0235 protein Neut_2146 (Nitrosomonas eutropha (strain DSM 101675 / C91 / Nm57)).